Reading from the N-terminus, the 351-residue chain is N-acetyl-gamma-glutamyl-phosphate reductase (351 aa).

Residue C154 is part of the active site.

Belongs to the NAGSA dehydrogenase family. Type 1 subfamily.

The protein localises to the cytoplasm. The catalysed reaction is N-acetyl-L-glutamate 5-semialdehyde + phosphate + NADP(+) = N-acetyl-L-glutamyl 5-phosphate + NADPH + H(+). The protein operates within amino-acid biosynthesis; L-arginine biosynthesis; N(2)-acetyl-L-ornithine from L-glutamate: step 3/4. Its function is as follows. Catalyzes the NADPH-dependent reduction of N-acetyl-5-glutamyl phosphate to yield N-acetyl-L-glutamate 5-semialdehyde. In Prochlorococcus marinus (strain AS9601), this protein is N-acetyl-gamma-glutamyl-phosphate reductase.